The chain runs to 207 residues: Small ribosomal subunit protein uS4c (207 aa).

An S4 RNA-binding domain is found at 92-155 (MRLDNILFRL…TYQSILSKRI (64 aa)).

Belongs to the universal ribosomal protein uS4 family. Part of the 30S ribosomal subunit. Contacts protein S5. The interaction surface between S4 and S5 is involved in control of translational fidelity.

It localises to the plastid. The protein resides in the chloroplast. One of the primary rRNA binding proteins, it binds directly to 16S rRNA where it nucleates assembly of the body of the 30S subunit. Functionally, with S5 and S12 plays an important role in translational accuracy. The protein is Small ribosomal subunit protein uS4c (rps4) of Equisetum scirpoides (Dwarf-scouring rush).